Here is a 449-residue protein sequence, read N- to C-terminus: Protein king tubby (449 aa).

The interval 123 to 197 is disordered; it reads SAVHSANSTQ…GTGGESEGDV (75 aa). The span at 124–145 shows a compositional bias: polar residues; the sequence is AVHSANSTQSQRPRPRQHSFSD. At Ser142 the chain carries Phosphoserine. The span at 154–166 shows a compositional bias: low complexity; the sequence is NRNVAAAAPVRPA. Gly residues predominate over residues 183-192; sequence NGTGNGTGGE.

Belongs to the TUB family.

It is found in the cytoplasm. The protein localises to the nucleus. Its subcellular location is the cell projection. It localises to the cilium membrane. The protein resides in the rhabdomere. The polypeptide is Protein king tubby (Drosophila ananassae (Fruit fly)).